Reading from the N-terminus, the 103-residue chain is Small ribosomal subunit protein uS10 (103 aa).

Belongs to the universal ribosomal protein uS10 family. As to quaternary structure, part of the 30S ribosomal subunit.

In terms of biological role, involved in the binding of tRNA to the ribosomes. The polypeptide is Small ribosomal subunit protein uS10 (Desulfatibacillum aliphaticivorans).